Here is a 544-residue protein sequence, read N- to C-terminus: CTP synthase (544 aa).

Residues 1 to 265 (MTKFIFVTGG…DNIITEQLQL (265 aa)) form an amidoligase domain region. Ser13 is a binding site for CTP. Position 13 (Ser13) interacts with UTP. ATP-binding positions include 14–19 (SLGKGI) and Asp71. Residues Asp71 and Glu139 each contribute to the Mg(2+) site. CTP-binding positions include 146-148 (DIE), 186-191 (KTKPTQ), and Lys222. Residues 186–191 (KTKPTQ) and Lys222 contribute to the UTP site. The 255-residue stretch at 290 to 544 (KIAMVGKYVD…VKAALNNKKA (255 aa)) folds into the Glutamine amidotransferase type-1 domain. Gly353 is a binding site for L-glutamine. The active-site Nucleophile; for glutamine hydrolysis is Cys380. Residues 381–384 (LGMQ), Glu404, and Arg471 contribute to the L-glutamine site. Active-site residues include His517 and Glu519.

This sequence belongs to the CTP synthase family. Homotetramer.

The enzyme catalyses UTP + L-glutamine + ATP + H2O = CTP + L-glutamate + ADP + phosphate + 2 H(+). It catalyses the reaction L-glutamine + H2O = L-glutamate + NH4(+). The catalysed reaction is UTP + NH4(+) + ATP = CTP + ADP + phosphate + 2 H(+). It participates in pyrimidine metabolism; CTP biosynthesis via de novo pathway; CTP from UDP: step 2/2. Its activity is regulated as follows. Allosterically activated by GTP, when glutamine is the substrate; GTP has no effect on the reaction when ammonia is the substrate. The allosteric effector GTP functions by stabilizing the protein conformation that binds the tetrahedral intermediate(s) formed during glutamine hydrolysis. Inhibited by the product CTP, via allosteric rather than competitive inhibition. In terms of biological role, catalyzes the ATP-dependent amination of UTP to CTP with either L-glutamine or ammonia as the source of nitrogen. Regulates intracellular CTP levels through interactions with the four ribonucleotide triphosphates. The chain is CTP synthase from Neisseria meningitidis serogroup A / serotype 4A (strain DSM 15465 / Z2491).